The primary structure comprises 684 residues: Coiled-coil domain-containing protein 62 (684 aa).

2 coiled-coil regions span residues 11-160 (RQNI…QALT) and 199-322 (TCIV…ESKA). The disordered stretch occupies residues 579 to 603 (SLGSSKSALREDETESSSNKKNSPT). Polar residues predominate over residues 594–603 (SSSNKKNSPT). 2 consecutive short sequence motifs (LXXLL motif) follow at residues 634-638 (LQRLL) and 650-654 (LSTLL). The tract at residues 657–684 (SHENLTGSATNKSEVPEESAQKNTFVSY) is disordered. The segment covering 659–669 (ENLTGSATNKS) has biased composition (polar residues).

In terms of assembly, interacts with ESR1 and ESR2 in the presence of estradiol/E2. The interaction with ESR2 recruits CCDC62 to ER target genes, including cyclin-D1/CCND1 AP-1 promoter. Interacts with GOPC. In terms of tissue distribution, highly expressed in adult testis. Expressed in both prostate epithelial and stromal cells, with predominant expression in epithelial cells (at protein level). Not detected in prostate by RT-PCR. Overexpressed in various cancers.

The protein resides in the cytoplasm. It localises to the nucleus. The protein localises to the cytoplasmic vesicle. Its subcellular location is the secretory vesicle. It is found in the acrosome. Functionally, nuclear receptor coactivator that can enhance preferentially estrogen receptors ESR1 and ESR2 transactivation. Also modulates progesterone/PGR, glucocorticoid/NR3C1 and androgen/AR receptors transactivation, although at lower level; little effect on vitamin D receptor/VDR. Required for normal spermiogenesis. It probably plays a role in acrosome formation. This is Coiled-coil domain-containing protein 62 (CCDC62) from Homo sapiens (Human).